The sequence spans 525 residues: 2-isopropylmalate synthase (525 aa).

Residues 12 to 274 (VVIFDTTLRD…WNKIDTTQLT (263 aa)) form the Pyruvate carboxyltransferase domain. Residues Asp-21, His-209, His-211, and Asn-245 each coordinate Mn(2+). Positions 398–525 (KLLSLSVIAG…GHGASAAAAS (128 aa)) are regulatory domain.

The protein belongs to the alpha-IPM synthase/homocitrate synthase family. LeuA type 1 subfamily. As to quaternary structure, homodimer. Requires Mn(2+) as cofactor.

Its subcellular location is the cytoplasm. The enzyme catalyses 3-methyl-2-oxobutanoate + acetyl-CoA + H2O = (2S)-2-isopropylmalate + CoA + H(+). It participates in amino-acid biosynthesis; L-leucine biosynthesis; L-leucine from 3-methyl-2-oxobutanoate: step 1/4. Functionally, catalyzes the condensation of the acetyl group of acetyl-CoA with 3-methyl-2-oxobutanoate (2-ketoisovalerate) to form 3-carboxy-3-hydroxy-4-methylpentanoate (2-isopropylmalate). The sequence is that of 2-isopropylmalate synthase from Bradyrhizobium sp. (strain ORS 278).